The primary structure comprises 100 residues: Small ribosomal subunit protein uS14c (100 aa).

It belongs to the universal ribosomal protein uS14 family. As to quaternary structure, part of the 30S ribosomal subunit.

Its subcellular location is the plastid. The protein localises to the chloroplast. Functionally, binds 16S rRNA, required for the assembly of 30S particles. The polypeptide is Small ribosomal subunit protein uS14c (Gracilaria tenuistipitata var. liui (Red alga)).